The primary structure comprises 322 residues: Sideroflexin-2 (322 aa).

Methionine 1 bears the N-acetylmethionine mark. Helical transmembrane passes span 100–122, 142–164, 174–192, 228–250, and 265–287; these read MIIT…WQWV, SVRQ…AVGM, LVGR…CVNI, VVIS…MERL, and PLQV…GLFP.

This sequence belongs to the sideroflexin family.

The protein resides in the mitochondrion inner membrane. The protein localises to the mitochondrion outer membrane. The enzyme catalyses L-serine(in) = L-serine(out). Functionally, mitochondrial amino-acid transporter that mediates transport of serine into mitochondria. Involved in mitochondrial iron homeostasis by regulating heme biosynthesis. The polypeptide is Sideroflexin-2 (Bos taurus (Bovine)).